We begin with the raw amino-acid sequence, 500 residues long: E3 ubiquitin-protein ligase TRIM69 (500 aa).

The segment at 1-152 is necessary for nuclear localization; it reads MEVSTNPSSN…SVGQSKEFLQ (152 aa). An RING-type zinc finger spans residues 41–82; that stretch reads CPLCNDWFRDPLMLSCGHNFCEACIQDFWRLQAKETFCPECK. The stretch at 161 to 255 forms a coiled coil; that stretch reads TEELAIQQGQ…QCLLAKDMLV (95 aa). A B30.2/SPRY domain is found at 305–500; sequence PIQYMVWREM…KEPLHILHPQ (196 aa). A Phosphoserine modification is found at serine 341.

The protein belongs to the TRIM/RBCC family. Homo-multimer; required for antiviral activity. Interacts with PML. Phosphorylated. Phosphorylation is necessary for nuclear localization.

The protein localises to the cytoplasm. It is found in the nucleus. Its subcellular location is the nucleus speckle. It localises to the cytoskeleton. The protein resides in the microtubule organizing center. The protein localises to the centrosome. The enzyme catalyses S-ubiquitinyl-[E2 ubiquitin-conjugating enzyme]-L-cysteine + [acceptor protein]-L-lysine = [E2 ubiquitin-conjugating enzyme]-L-cysteine + N(6)-ubiquitinyl-[acceptor protein]-L-lysine.. It functions in the pathway protein modification; protein ubiquitination. E3 ubiquitin ligase that plays an important role in antiviral immunity by restricting different viral infections including dengue virus or vesicular stomatitis indiana virus. Ubiquitinates viral proteins such as dengue virus NS3 thereby limiting infection. In addition, acts as a key mediator of type I interferon induced microtubule stabilization by directly associating to microtubules independently of its E3 ligase activity. Also plays a role in cataract formation together with TP53. Mechanistically, inhibits UVB-induced cell apoptosis and reactive oxygen species (ROS) production by inducing TP53 ubiquitination. Regulates centrosome dynamics and mitotic progression by ubiquitinating STK3/MST2; leading to its redistribution to the perinuclear cytoskeleton and subsequent phosphorylation by PLK1. This Homo sapiens (Human) protein is E3 ubiquitin-protein ligase TRIM69 (TRIM69).